The sequence spans 437 residues: Enolase (437 aa).

Glutamine 162 provides a ligand contact to (2R)-2-phosphoglycerate. Glutamate 204 serves as the catalytic Proton donor. Positions 251, 297, and 324 each coordinate Mg(2+). Residues lysine 349, arginine 378, serine 379, and lysine 400 each contribute to the (2R)-2-phosphoglycerate site. Catalysis depends on lysine 349, which acts as the Proton acceptor.

Belongs to the enolase family. It depends on Mg(2+) as a cofactor.

The protein resides in the cytoplasm. Its subcellular location is the secreted. The protein localises to the cell surface. It carries out the reaction (2R)-2-phosphoglycerate = phosphoenolpyruvate + H2O. The protein operates within carbohydrate degradation; glycolysis; pyruvate from D-glyceraldehyde 3-phosphate: step 4/5. Functionally, catalyzes the reversible conversion of 2-phosphoglycerate (2-PG) into phosphoenolpyruvate (PEP). It is essential for the degradation of carbohydrates via glycolysis. This chain is Enolase, found in Chlorobium phaeobacteroides (strain DSM 266 / SMG 266 / 2430).